The primary structure comprises 219 residues: Probable oxidoreductase virH (219 aa).

It belongs to the oxidoreductase OpS7 family.

It functions in the pathway secondary metabolite biosynthesis. Its function is as follows. Probable oxidoreductase; part of the gene cluster that mediates the biosynthesis of virensols and trichoxide, fungal natural products that contain or are derived from a salicylaldehyde core. The pathway begins with the synthesis of the reduced chain in virensol C by the highly reducing polyketide synthase virA via condensation of one acetate and 8 malonate units. VirA has interesting programming rules since the first 2 ketides are fully reduced, the 3 following ketides undergo beta-dehydration, and the last 3 ketides are only reduced to beta-hydroxys to yield the trihydroxy portion. The production of aldehyde virensol C by virA alone is surprising, since virA does not contain a reductase (R) domain that is typically associated with reductive product release in HRPKS. The cupin-domain enzyme virC is involved in enhancing virA product turnover. The short-chain dehydrogenase virB then oxidizes the C-7 alcohol of virensol C to a ketone, yielding virensol D. Virensol D is further transformed to salicylaldehyde 5-deoxyaurocitrin by the short-chain dehydrogenase virD. VirD catalyzes the dehydrogenation of C-3 to form the beta-ketone aldehyde, which is followed by the generation of the nucleophilic C-2 that is required for the intramolecular aldol condensation between C-2 and C-7, itself followed by dehydration and aromatization which leads to salicylaldehyde 5-deoxyaurocitrin. While the dehydrogenation of virensol D is definitely catalyzed by virD, the aldol condensation and dehydration may be uncatalyzed or assisted by virD. The short chain dehydrogenase virG then converts salicylaldehyde 5-deoxyaurocitrin into virensol B which is further hydroxylated by the cytochrome P450 monooxygenase virE to yield the hydroquinone virensol A. VirI then may oxidize virensol A to form the quinone, while virH performs the epoxidation. Finally, the two remaining short-chain dehydrogenases, virK and virL, are probably responsible for reducing the ketones to the corresponding alcohols to furnish the epoxycyclohexanol structure in trichoxide. This chain is Probable oxidoreductase virH, found in Hypocrea virens (strain Gv29-8 / FGSC 10586) (Gliocladium virens).